The following is a 213-amino-acid chain: MKAYQREFIEFALEKEVLKFGEFTLKSGRKSPYFFNAGLFNTGRDLARLGRFYAAALADSGIEFDVLFGPAYKGIPIATTTAVALADHHDIDTPYCFNRKEAKNHGEGGNLVGSALEGRIMLVDDVITAGTAIRESMEIIKANGADLAGVLVAIDRQEKGKGELSAIQEVERDFGCAVISIVSLGDLITYLEEKGNATEHLEAVKAYRAEYGI.

Residue K26 participates in 5-phospho-alpha-D-ribose 1-diphosphate binding. Position 34–35 (34–35 (FF)) interacts with orotate. Residues 72–73 (YK), R99, K100, K103, H105, and 124–132 (DDVITAGTA) contribute to the 5-phospho-alpha-D-ribose 1-diphosphate site. Positions 128 and 156 each coordinate orotate.

This sequence belongs to the purine/pyrimidine phosphoribosyltransferase family. PyrE subfamily. In terms of assembly, homodimer. Mg(2+) is required as a cofactor.

The enzyme catalyses orotidine 5'-phosphate + diphosphate = orotate + 5-phospho-alpha-D-ribose 1-diphosphate. The protein operates within pyrimidine metabolism; UMP biosynthesis via de novo pathway; UMP from orotate: step 1/2. Functionally, catalyzes the transfer of a ribosyl phosphate group from 5-phosphoribose 1-diphosphate to orotate, leading to the formation of orotidine monophosphate (OMP). The sequence is that of Orotate phosphoribosyltransferase from Vibrio parahaemolyticus serotype O3:K6 (strain RIMD 2210633).